We begin with the raw amino-acid sequence, 336 residues long: Mitochondrial thiamine pyrophosphate carrier 1 (336 aa).

Solcar repeat units lie at residues 11–98 (ISST…VNQV), 112–202 (SSGA…VKDS), and 221–323 (TKGW…SLSI). Helical transmembrane passes span 17 to 37 (MLCG…LDVV), 66 to 86 (GVTA…FYGA), 118 to 138 (FIAG…FDLF), 177 to 197 (GVSS…ASYG), 228 to 244 (TAGL…VFPL), and 298 to 315 (GFLV…ITMY).

The protein belongs to the mitochondrial carrier (TC 2.A.29) family.

The protein localises to the mitochondrion inner membrane. In terms of biological role, mitochondrial transporter that mediates uptake of thiamine pyrophosphate (ThPP) into mitochondria. This Yarrowia lipolytica (strain CLIB 122 / E 150) (Yeast) protein is Mitochondrial thiamine pyrophosphate carrier 1 (TPC1).